A 962-amino-acid chain; its full sequence is Glycine dehydrogenase (decarboxylating) (962 aa).

Residue Lys709 is modified to N6-(pyridoxal phosphate)lysine.

The protein belongs to the GcvP family. In terms of assembly, the glycine cleavage system is composed of four proteins: P, T, L and H. It depends on pyridoxal 5'-phosphate as a cofactor.

The enzyme catalyses N(6)-[(R)-lipoyl]-L-lysyl-[glycine-cleavage complex H protein] + glycine + H(+) = N(6)-[(R)-S(8)-aminomethyldihydrolipoyl]-L-lysyl-[glycine-cleavage complex H protein] + CO2. The glycine cleavage system catalyzes the degradation of glycine. The P protein binds the alpha-amino group of glycine through its pyridoxal phosphate cofactor; CO(2) is released and the remaining methylamine moiety is then transferred to the lipoamide cofactor of the H protein. In Shewanella baltica (strain OS155 / ATCC BAA-1091), this protein is Glycine dehydrogenase (decarboxylating).